Here is a 506-residue protein sequence, read N- to C-terminus: Nucleosome assembly protein 1-like 3 (506 aa).

Disordered regions lie at residues 1–95 (MAEA…LGTN) and 157–307 (PTEE…KRED). The segment covering 35-70 (SSSSSSSTSDSSSSSSTSGSSSGSGSSSSSSGSTSS) has biased composition (low complexity). Over residues 157–178 (PTEEECEWNSEDEEFSSDEEVQ) the composition is skewed to acidic residues. The span at 196-296 (PKENPEVKAE…ERLQDSVDLK (101 aa)) shows a compositional bias: basic and acidic residues.

Belongs to the nucleosome assembly protein (NAP) family.

It is found in the nucleus. In Homo sapiens (Human), this protein is Nucleosome assembly protein 1-like 3 (NAP1L3).